The following is a 77-amino-acid chain: Conotoxin Ar5.1 b (77 aa).

Positions 1 to 19 (MLCLPVFIILLLLASPAAS) are cleaved as a signal peptide. Positions 20–44 (NPLKTRIQSDLIRAALEDADMKNEK) are excised as a propeptide.

It belongs to the conotoxin T superfamily. Contains 2 disulfide bonds that can be either 'C1-C3, C2-C4' or 'C1-C4, C2-C3', since these disulfide connectivities have been observed for conotoxins with cysteine framework V (for examples, see AC P0DQQ7 and AC P81755). As to expression, expressed by the venom duct.

The protein resides in the secreted. The protein is Conotoxin Ar5.1 b of Conus arenatus (Sand-dusted cone).